The sequence spans 386 residues: NADH kinase pos5, mitochondrial (386 aa).

Residues 1–42 (MIRAANGFRISVRNTAVCLAPNFRQLKGFSIINLGSLQYFRY) constitute a mitochondrion transit peptide.

It belongs to the NAD kinase family.

The protein localises to the mitochondrion. The catalysed reaction is NADH + ATP = ADP + NADPH + H(+). Phosphorylates both NADH and NAD(+), with a preference for NADH. Anti-oxidant factor and key source of the cellular reductant NADPH. This chain is NADH kinase pos5, mitochondrial (pos5), found in Schizosaccharomyces pombe (strain 972 / ATCC 24843) (Fission yeast).